Reading from the N-terminus, the 795-residue chain is RAS guanyl-releasing protein 1 (795 aa).

Residues 1–12 (MGTLGKAREAPR) show a composition bias toward basic and acidic residues. Positions 1–37 (MGTLGKAREAPRKPCHGSRAGPKARLEAKSTNSPLPA) are disordered. The N-terminal Ras-GEF domain occupies 53 to 176 (LGHLAKGASL…HLIDTTQINS (124 aa)). The tract at residues 57–110 (AKGASLDDLIDSCIQSFDADGNLCRNNQLLQVMLTMHRIIISSAELLQKVMNLY) is ras exchanger motif region; required for transforming activity. Thr184 carries the phosphothreonine; by PKC modification. A Ras-GEF domain is found at 205–436 (EPEELSEHLT…YELSYAREPR (232 aa)). EF-hand domains follow at residues 470 to 505 (HVQR…FPFS) and 506 to 532 (FCVM…ASSI). The Ca(2+) site is built by Asp483, Asp485, Asp487, Tyr489, and Glu494. The Phorbol-ester/DAG-type zinc finger occupies 541–591 (PHNFQETTYLKPTFCDNCAGFLWGVIKQGYRCKDCGMNCHKQCKDLVVFEC). Position 597 is a phosphoserine (Ser597). The interval 686 to 694 (TPGHFVLSS) is suppress the PT region-mediated translocation to plasma membrane. The interval 717–795 (LVRKRAFVKW…LAQMDHGDSA (79 aa)) is PT region; mediates the BCR-dependent translocation to plasma membrane. Residues 738 to 779 (ELHLRLRTYQELEQEINTLKADNDALKIQLKYAQKKIESLQL) are a coiled coil.

This sequence belongs to the RASGRP family. In terms of assembly, homodimer. Forms a signaling complex with DGKZ and HRAS. Interacts with F-actin. Interacts with SKAP1. As to expression, detected in spleen and thymus. Expressed by mature thymocytes and to a lower extent by bone marrow-derived mast cells (at protein level). Detected in B-cells and keratinocytes (at protein level).

The protein localises to the cytoplasm. The protein resides in the cytosol. It is found in the cell membrane. It localises to the golgi apparatus membrane. Its subcellular location is the endoplasmic reticulum membrane. Its activity is regulated as follows. Autoinhibited. Activated by diacylglycerol and calcium binding, which induces a conformational change releasing the autoinhibitory state. Regulated by DGKA. Regulated by DGKZ. Regulated by PLC gamma and F-actin polymerization. In terms of biological role, functions as a calcium- and diacylglycerol (DAG)-regulated nucleotide exchange factor specifically activating Ras through the exchange of bound GDP for GTP. Activates the Erk/MAP kinase cascade. Regulates T-cell/B-cell development, homeostasis and differentiation by coupling T-lymphocyte/B-lymphocyte antigen receptors to Ras. Regulates NK cell cytotoxicity and ITAM-dependent cytokine production by activation of Ras-mediated ERK and JNK pathways. Functions in mast cell degranulation and cytokine secretion, regulating FcERI-evoked allergic responses. May also function in differentiation of other cell types. Proto-oncogene, which promotes T-cell lymphomagenesis when its expression is deregulated. The chain is RAS guanyl-releasing protein 1 (Rasgrp1) from Mus musculus (Mouse).